Reading from the N-terminus, the 57-residue chain is Large ribosomal subunit protein bL32 (57 aa).

A compositionally biased stretch (basic residues) spans 1–20 (MAVPKRRMSRSNTRSRRAQW). The disordered stretch occupies residues 1 to 22 (MAVPKRRMSRSNTRSRRAQWKA).

The protein belongs to the bacterial ribosomal protein bL32 family.

This chain is Large ribosomal subunit protein bL32, found in Mycobacterium sp. (strain JLS).